Here is a 267-residue protein sequence, read N- to C-terminus: Trehalose-phosphate phosphatase (267 aa).

The active-site Nucleophile is the Asp20. Mg(2+)-binding residues include Asp20, Asp22, and Asp198. 20-22 (DLD) lines the substrate pocket.

The protein belongs to the trehalose phosphatase family. Mg(2+) is required as a cofactor.

It catalyses the reaction alpha,alpha-trehalose 6-phosphate + H2O = alpha,alpha-trehalose + phosphate. It functions in the pathway glycan biosynthesis; trehalose biosynthesis. Functionally, removes the phosphate from trehalose 6-phosphate to produce free trehalose. In Salmonella typhimurium (strain LT2 / SGSC1412 / ATCC 700720), this protein is Trehalose-phosphate phosphatase (otsB).